We begin with the raw amino-acid sequence, 411 residues long: MKMVLSQRQREELNQAIADYLGSNGYADSLETFRKEADLSTESEKKYGGLLEKKWTSVIRLQKKVMDLEAKLTEAEKEVIEGAPTKNKRTPGEWIPRPPEKYSLTGHRASITRVIFHPIFGLMVSASEDATIKIWDFETGEYERSLKGHTDSVQDVAFDAQGKLLASCSADLSIKLWDFQQSYECVKTMHGHDHNVSSVAFVPAGDYVLSASRDRTIKMWEVATGYCVKTYTGHREWVRMVRVHIEGSIFATCSNDHTIRVWLTNSKDCKVELRDHEHTVECIAWAPEAAASAINEAAGADNKKGHHQGPFLASGSRDKTIRIWDVSVGLCLLTLNGHDNWVRGLAFHPGGKYLVSASDDKTIRVWDLRNKRCMKTLYAHQHFCTSIDFHKAHPYVISGSVDQSVKVWECR.

In terms of domain architecture, LisH spans 9-41; that stretch reads QREELNQAIADYLGSNGYADSLETFRKEADLST. Residues 56–83 adopt a coiled-coil conformation; it reads TSVIRLQKKVMDLEAKLTEAEKEVIEGA. WD repeat units follow at residues 106–147, 148–187, 191–230, 233–272, 275–334, 337–376, and 379–411; these read GHRA…RSLK, GHTDSVQDVAFDAQGKLLASCSADLSIKLWDFQQSYECVK, GHDHNVSSVAFVPAGDYVLSASRDRTIKMWEVATGYCVKT, GHREWVRMVRVHIEGSIFATCSNDHTIRVWLTNSKDCKVE, DHEH…CLLT, GHDNWVRGLAFHPGGKYLVSASDDKTIRVWDLRNKRCMKT, and AHQHFCTSIDFHKAHPYVISGSVDQSVKVWECR.

It belongs to the WD repeat LIS1/nudF family.

Its subcellular location is the cytoplasm. It is found in the cytoskeleton. It localises to the microtubule organizing center. The protein localises to the centrosome. Positively regulates the activity of the minus-end directed microtubule motor protein dynein. May enhance dynein-mediated microtubule sliding by targeting dynein to the microtubule plus end. Required for several dynein- and microtubule-dependent processes. This is Lissencephaly-1 homolog from Drosophila mojavensis (Fruit fly).